Consider the following 809-residue polypeptide: Glycerol-3-phosphate acyltransferase (809 aa).

The short motif at 309–314 (HRSHMD) is the HXXXXD motif element.

Belongs to the GPAT/DAPAT family.

Its subcellular location is the cell inner membrane. The enzyme catalyses sn-glycerol 3-phosphate + an acyl-CoA = a 1-acyl-sn-glycero-3-phosphate + CoA. It participates in phospholipid metabolism; CDP-diacylglycerol biosynthesis; CDP-diacylglycerol from sn-glycerol 3-phosphate: step 1/3. The sequence is that of Glycerol-3-phosphate acyltransferase from Shewanella oneidensis (strain ATCC 700550 / JCM 31522 / CIP 106686 / LMG 19005 / NCIMB 14063 / MR-1).